Reading from the N-terminus, the 125-residue chain is Mitochondrial import inner membrane translocase subunit TIM16 (125 aa).

The tract at residues 58 to 110 (EAQQILNVSKLSPEEVQKNYEHLFKVNDKSVGGSFYLQSKVVRAKERLDEELR) is J-like. Serine 69 carries the phosphoserine modification.

Belongs to the TIM16/PAM16 family. As to quaternary structure, probable component of the PAM complex at least composed of a mitochondrial HSP70 protein, GRPEL1 or GRPEL2, TIMM44, TIMM16/PAM16 and TIMM14/DNAJC19. Interacts with DNAJC19. Directly interacts with DNAJC15; this interaction counteracts DNAJC15-dependent stimulation of HSPA9 ATPase activity. Associates with the TIM23 complex. Expressed in trabecular bone and cartilage and by differentiated chondrocytes localized in the hypertrophic zone and by osteoblasts at early developmental stages.

The protein resides in the mitochondrion inner membrane. Regulates ATP-dependent protein translocation into the mitochondrial matrix. Inhibits DNAJC19 stimulation of HSPA9/Mortalin ATPase activity. The sequence is that of Mitochondrial import inner membrane translocase subunit TIM16 from Mus musculus (Mouse).